The chain runs to 152 residues: Protein D1 (152 aa).

The protein belongs to the phosphatidylethanolamine-binding protein family.

In Onchocerca volvulus, this protein is Protein D1 (D1).